Here is a 205-residue protein sequence, read N- to C-terminus: Holliday junction branch migration complex subunit RuvA (205 aa).

Residues 1 to 64 are domain I; sequence MIGKLRGLID…EDQIKLFGFR (64 aa). The domain II stretch occupies residues 65-143; the sequence is SDVEREWFRL…AFANVDPGVV (79 aa). A flexible linker region spans residues 144 to 154; that stretch reads RLSGAIEESRA. The segment at 154-205 is domain III; the sequence is APQPVADAISALINLGYGQPQAAAAIAAASRAAGDKAETAQLIRLGLKELAK.

This sequence belongs to the RuvA family. In terms of assembly, homotetramer. Forms an RuvA(8)-RuvB(12)-Holliday junction (HJ) complex. HJ DNA is sandwiched between 2 RuvA tetramers; dsDNA enters through RuvA and exits via RuvB. An RuvB hexamer assembles on each DNA strand where it exits the tetramer. Each RuvB hexamer is contacted by two RuvA subunits (via domain III) on 2 adjacent RuvB subunits; this complex drives branch migration. In the full resolvosome a probable DNA-RuvA(4)-RuvB(12)-RuvC(2) complex forms which resolves the HJ.

It localises to the cytoplasm. In terms of biological role, the RuvA-RuvB-RuvC complex processes Holliday junction (HJ) DNA during genetic recombination and DNA repair, while the RuvA-RuvB complex plays an important role in the rescue of blocked DNA replication forks via replication fork reversal (RFR). RuvA specifically binds to HJ cruciform DNA, conferring on it an open structure. The RuvB hexamer acts as an ATP-dependent pump, pulling dsDNA into and through the RuvAB complex. HJ branch migration allows RuvC to scan DNA until it finds its consensus sequence, where it cleaves and resolves the cruciform DNA. In Bradyrhizobium sp. (strain ORS 278), this protein is Holliday junction branch migration complex subunit RuvA.